The primary structure comprises 297 residues: uncharacterized protein (297 aa).

A coiled-coil region spans residues 128–156 (RGVIVEQESEAAAEKDELESLAKVLESDF).

This is an uncharacterized protein from Bacillus subtilis (strain 168).